Here is a 293-residue protein sequence, read N- to C-terminus: MKI67 FHA domain-interacting nucleolar phosphoprotein (293 aa).

Ala-2 carries the N-acetylalanine modification. Lys-38 participates in a covalent cross-link: Glycyl lysine isopeptide (Lys-Gly) (interchain with G-Cter in SUMO2). Residues 45 to 123 (GVVYVRHLPN…RLLECHFMPP (79 aa)) form the RRM domain. The residue at position 114 (Arg-114) is an Omega-N-methylarginine; by PRMT1 and PRMT8. A Glycyl lysine isopeptide (Lys-Gly) (interchain with G-Cter in SUMO2) cross-link involves residue Lys-139. At Ser-145 the chain carries Phosphoserine. Glycyl lysine isopeptide (Lys-Gly) (interchain with G-Cter in SUMO2) cross-links involve residues Lys-179 and Lys-192. Residues 197 to 207 (SKTNRQTSTKG) show a composition bias toward polar residues. A disordered region spans residues 197–239 (SKTNRQTSTKGQVLRKKKKKVSGTLDTPEKTVDSQGPTPVCTP). Residue Ser-218 is modified to Phosphoserine. At Thr-223 the chain carries Phosphothreonine. The interval 226–269 (KTVDSQGPTPVCTPTFLERRKSQVAELNDDDKDDEIVFKQPISC) is interaction with MKI67. Ser-230 bears the Phosphoserine mark. Phosphothreonine is present on residues Thr-234 and Thr-238. Residues Arg-244 and Arg-245 each carry the omega-N-methylated arginine; by PRMT1 and PRMT8 modification. Ser-247 is subject to Phosphoserine. Lys-271 is covalently cross-linked (Glycyl lysine isopeptide (Lys-Gly) (interchain with G-Cter in SUMO1); alternate). A Glycyl lysine isopeptide (Lys-Gly) (interchain with G-Cter in SUMO2); alternate cross-link involves residue Lys-271. A disordered region spans residues 271 to 293 (KEEIQETQTPTHSRKKRRRSSNQ). Thr-279 carries the phosphothreonine modification. The span at 282–293 (HSRKKRRRSSNQ) shows a compositional bias: basic residues. Position 284 is an omega-N-methylarginine; by PRMT1 and PRMT8 (Arg-284).

In terms of assembly, binds to the FHA domain of MKI67; this interaction is enhanced in mitosis. Post-translationally, sequentially phosphorylated on Thr-238, Thr-234 and Ser-230. Thr-234 is phosphorylated only when Thr-238 is phosphorylated. Likewise, phosphorylation at Ser-230 requires that Thr-234 and Thr-238 are phosphorylated. Phosphorylation enhances MKI67 binding.

Its subcellular location is the nucleus. The protein localises to the nucleolus. The protein resides in the chromosome. In Homo sapiens (Human), this protein is MKI67 FHA domain-interacting nucleolar phosphoprotein (NIFK).